The following is a 90-amino-acid chain: MMITTNHPLYEALRDIQEFKLRLVEYFKDKDVFPIKNKVELAEALPCGISLPCGEIEAAELVKLLTDNDFPIKDPEDLAMKLANKCPIKQ.

This is an uncharacterized protein from Methanocaldococcus jannaschii (strain ATCC 43067 / DSM 2661 / JAL-1 / JCM 10045 / NBRC 100440) (Methanococcus jannaschii).